The chain runs to 85 residues: MASFKIVIVCLALLVAVACARRRDMMSDDELDYHYSKRGIPCACDSDGPDIRSASLSGIVWMGSCPSGWKKCKSYYSIVADCCNQ.

Positions 1-20 (MASFKIVIVCLALLVAVACA) are cleaved as a signal peptide. The propeptide occupies 21-36 (RRRDMMSDDELDYHYS). Intrachain disulfides connect Cys-42/Cys-82, Cys-44/Cys-72, and Cys-65/Cys-83.

Belongs to the sea anemone sodium channel inhibitory toxin family. Type II subfamily. In terms of tissue distribution, expressed in ectodermal glands and in clumps outside of the extodermal layer. Is not expressed in nematocytes. In adult female tissues, shows similar expression levels in mesenteries (gametes-producing tissue), tentacles, pharynx and physa.

It is found in the secreted. Binds to site 3 of voltage-gated sodium channels and inhibits the inactivation process. Is highly active on DmNav1/TipE (drosophila) and is only extremely weakly active on rat Nav1.4-beta-1/SCN4A-SCN1B, and on human Nav1.5-beta-1/SCN5A-beta-1. This reveals high specificity for arthropod over mammalian channels. In vivo, when released into the medium, this recombinant toxin induces impaired swimming, paralysis and death of the crustacean A.nauplii within several hours. Also causes paralysis of cherry shrimps immediately after injection at very low doses. Its effect on zebrafish (D.rerio) larvae is also rapid, since it induces tail twitching accompanied by impaired swimming after 20 minutes and complete paralysis within 45 minutes. It has also been observed to cause death of zebrafish larvae within 1 hour. This chain is N.vectensis toxin 1 6, found in Nematostella vectensis (Starlet sea anemone).